A 471-amino-acid chain; its full sequence is Protein naked cuticle homolog 1 (471 aa).

Disordered stretches follow at residues Met-1–Phe-23 and Gln-41–Asp-82. Gly-2 is lipidated: N-myristoyl glycine. Residues Gly-62–Leu-75 show a composition bias toward basic and acidic residues. Residues Gln-125 to Asp-190 are interaction with DVL1, DVL2 and DVL3. One can recognise an EF-hand domain in the interval Glu-131–Val-166. 5 residues coordinate Ca(2+): Asp-144, Asp-146, Asn-148, Lys-150, and Asp-155. Disordered regions lie at residues Gly-273–Asp-314, Gly-337–Ala-382, and Gln-448–Pro-471. Residues His-453–Pro-471 show a composition bias toward basic residues.

This sequence belongs to the NKD family. In terms of assembly, interacts with DVL1, DVL2, DVL3 and PPP2R3A. In terms of tissue distribution, highly expressed in lung. Also expressed in brain, heart, kidney, liver, skin, stomach and testis. Within the testis expression is found in the seminiferous epithelium and round and elongating spermatids.

Its subcellular location is the cell membrane. It localises to the cytoplasm. Cell autonomous antagonist of the canonical Wnt signaling pathway. May activate a second Wnt signaling pathway that controls planar cell polarity. Required for spermatogenesis. This is Protein naked cuticle homolog 1 (Nkd1) from Mus musculus (Mouse).